We begin with the raw amino-acid sequence, 91 residues long: Small ribosomal subunit protein uS19 (91 aa).

The protein belongs to the universal ribosomal protein uS19 family.

In terms of biological role, protein S19 forms a complex with S13 that binds strongly to the 16S ribosomal RNA. The protein is Small ribosomal subunit protein uS19 of Alcanivorax borkumensis (strain ATCC 700651 / DSM 11573 / NCIMB 13689 / SK2).